The following is a 278-amino-acid chain: Probable endonuclease 4 (278 aa).

Zn(2+) is bound by residues histidine 66, histidine 106, glutamate 140, aspartate 172, histidine 175, histidine 209, aspartate 222, histidine 224, and glutamate 254.

Belongs to the AP endonuclease 2 family. Zn(2+) serves as cofactor.

The enzyme catalyses Endonucleolytic cleavage to 5'-phosphooligonucleotide end-products.. Endonuclease IV plays a role in DNA repair. It cleaves phosphodiester bonds at apurinic or apyrimidinic (AP) sites, generating a 3'-hydroxyl group and a 5'-terminal sugar phosphate. In Haloquadratum walsbyi (strain DSM 16790 / HBSQ001), this protein is Probable endonuclease 4.